The following is a 609-amino-acid chain: UvrABC system protein C (609 aa).

A GIY-YIG domain is found at 16–94 (HLPGVYRHLD…IKSLRPRYNI (79 aa)). One can recognise a UVR domain in the interval 203-238 (REVMDEIEARMLQASTELRFEEAAVLRDQMGSLSKV).

It belongs to the UvrC family. In terms of assembly, interacts with UvrB in an incision complex.

The protein resides in the cytoplasm. In terms of biological role, the UvrABC repair system catalyzes the recognition and processing of DNA lesions. UvrC both incises the 5' and 3' sides of the lesion. The N-terminal half is responsible for the 3' incision and the C-terminal half is responsible for the 5' incision. The chain is UvrABC system protein C from Bordetella pertussis (strain Tohama I / ATCC BAA-589 / NCTC 13251).